A 408-amino-acid chain; its full sequence is Diguanylate cyclase DgcN (408 aa).

Residues Met1–Thr24 are Cytoplasmic-facing. The chain crosses the membrane as a helical span at residues Ser25–Leu45. Topologically, residues Lys46 to Asn52 are periplasmic. The helical transmembrane segment at Leu53–Gly73 threads the bilayer. Residues Pro74–Pro112 are Cytoplasmic-facing. The helical transmembrane segment at Gly113–Ile133 threads the bilayer. Over Arg134 to His154 the chain is Periplasmic. Residues Phe155–Ile175 traverse the membrane as a helical segment. Residues Thr176–Arg408 are Cytoplasmic-facing. The 54-residue stretch at Asn183–Leu236 folds into the HAMP domain. Positions Lys278–Arg408 constitute a GGDEF domain. Residue Asp286 coordinates Mg(2+). Residues Asn294, His299, and Asp303 each coordinate substrate. Asp329 is a binding site for Mg(2+). Catalysis depends on Asp329, which acts as the Proton acceptor.

In terms of assembly, homodimer. Interacts with the cell division proteins FtsZ and ZipA. Mg(2+) is required as a cofactor.

The protein localises to the cell inner membrane. It catalyses the reaction 2 GTP = 3',3'-c-di-GMP + 2 diphosphate. It participates in purine metabolism; 3',5'-cyclic di-GMP biosynthesis. Inhibited by YfiR, which prevents relocation to the midcell. A reductive stress signal is required to inactivate YfiR and turn on the DGC activity of DgcN. Bifunctional protein that catalyzes the synthesis of cyclic-di-GMP (c-di-GMP) in response to reductive stress and then dynamically relocates to the division site to arrest cell division in response to envelope stress. In the presence of high intracellular c-di-GMP levels, and in response to envelope stress, interacts with cell division proteins and halts cell division, without disassembling the Z ring, but by blocking its further progress toward cytokinesis. Part of a network that regulates cell motility by altering levels of c-di-GMP. This chain is Diguanylate cyclase DgcN, found in Escherichia coli (strain K12).